A 519-amino-acid polypeptide reads, in one-letter code: tRNA pseudouridine synthase Pus10 (519 aa).

A disordered region spans residues 70 to 98 (NENEEIDENTKNNEDTENKADDKSQSNEE). Residues 77–98 (ENTKNNEDTENKADDKSQSNEE) are compositionally biased toward basic and acidic residues. Residues 144–265 (NESEENESNI…NQKIYLQINP (122 aa)) enclose the THUMP domain. Aspartate 334 serves as the catalytic Nucleophile. Tyrosine 398 and tyrosine 476 together coordinate substrate.

The protein belongs to the pseudouridine synthase Pus10 family.

It carries out the reaction uridine(54) in tRNA = pseudouridine(54) in tRNA. It catalyses the reaction uridine(55) in tRNA = pseudouridine(55) in tRNA. Functionally, responsible for synthesis of pseudouridine from uracil-54 and uracil-55 in the psi GC loop of transfer RNAs. The chain is tRNA pseudouridine synthase Pus10 from Methanococcus voltae (strain ATCC BAA-1334 / A3).